The primary structure comprises 188 residues: Peptide methionine sulfoxide reductase MsrA (188 aa).

The disordered stretch occupies residues 1–25 (MEGNEKAEQKNATSEESTDIFENPG). Cys37 is an active-site residue.

Belongs to the MsrA Met sulfoxide reductase family.

It catalyses the reaction L-methionyl-[protein] + [thioredoxin]-disulfide + H2O = L-methionyl-(S)-S-oxide-[protein] + [thioredoxin]-dithiol. The catalysed reaction is [thioredoxin]-disulfide + L-methionine + H2O = L-methionine (S)-S-oxide + [thioredoxin]-dithiol. Has an important function as a repair enzyme for proteins that have been inactivated by oxidation. Catalyzes the reversible oxidation-reduction of methionine sulfoxide in proteins to methionine. This is Peptide methionine sulfoxide reductase MsrA from Methanosarcina acetivorans (strain ATCC 35395 / DSM 2834 / JCM 12185 / C2A).